Consider the following 376-residue polypeptide: Chaperone protein DnaJ (376 aa).

The J domain maps to 5–70 (DYYEILGVSK…QKRAAYDQYG (66 aa)). The CR-type zinc finger occupies 131–209 (GVTKEIRIPT…CHGHGRVERS (79 aa)). C144, C147, C161, C164, C183, C186, C197, and C200 together coordinate Zn(2+). CXXCXGXG motif repeat units lie at residues 144–151 (CDVCHGSG), 161–168 (CPTCHGSG), 183–190 (CPHCQGRG), and 197–204 (CNKCHGHG).

The protein belongs to the DnaJ family. As to quaternary structure, homodimer. Zn(2+) is required as a cofactor.

It localises to the cytoplasm. In terms of biological role, participates actively in the response to hyperosmotic and heat shock by preventing the aggregation of stress-denatured proteins and by disaggregating proteins, also in an autonomous, DnaK-independent fashion. Unfolded proteins bind initially to DnaJ; upon interaction with the DnaJ-bound protein, DnaK hydrolyzes its bound ATP, resulting in the formation of a stable complex. GrpE releases ADP from DnaK; ATP binding to DnaK triggers the release of the substrate protein, thus completing the reaction cycle. Several rounds of ATP-dependent interactions between DnaJ, DnaK and GrpE are required for fully efficient folding. Also involved, together with DnaK and GrpE, in the DNA replication of plasmids through activation of initiation proteins. This Escherichia coli (strain K12 / MC4100 / BW2952) protein is Chaperone protein DnaJ.